The sequence spans 29 residues: Cyclotide mela-1 (29 aa).

Residues 1–29 (GKYTCGETCFKGKCYTPGCTCSYPICKKD) constitute a cross-link (cyclopeptide (Gly-Asp)). 3 disulfides stabilise this stretch: C5–C19, C9–C21, and C14–C26.

In terms of processing, this is a cyclic peptide. Contains 3 disulfide bonds.

Probably participates in a plant defense mechanism (Potential). Binds to and induces leakage in phospholipd membranes, particularly ones containing 1-palmitoyl-2-oleophosphatidylethanolamine (POPE). In vitro, displays cytotoxicity against cultured cells but no hemolytic activity towards fresh erythrocytes. Not active against Gram-negative bacterium E.coli ATCC 25922 or Gram-positive bacterium S.aureus ATCC 25923 up to a concentration of 64 uM. This Melicytus latifolius (Norfolk Island mahoe) protein is Cyclotide mela-1.